Consider the following 316-residue polypeptide: Putative transketolase C-terminal section (316 aa).

The protein belongs to the transketolase family. It depends on thiamine diphosphate as a cofactor.

It carries out the reaction D-sedoheptulose 7-phosphate + D-glyceraldehyde 3-phosphate = aldehydo-D-ribose 5-phosphate + D-xylulose 5-phosphate. This Methanocaldococcus jannaschii (strain ATCC 43067 / DSM 2661 / JAL-1 / JCM 10045 / NBRC 100440) (Methanococcus jannaschii) protein is Putative transketolase C-terminal section.